A 371-amino-acid polypeptide reads, in one-letter code: DNA replication and repair protein RecF (371 aa).

30–37 is a binding site for ATP; it reads GENAQGKT.

Belongs to the RecF family.

It is found in the cytoplasm. Its function is as follows. The RecF protein is involved in DNA metabolism; it is required for DNA replication and normal SOS inducibility. RecF binds preferentially to single-stranded, linear DNA. It also seems to bind ATP. The protein is DNA replication and repair protein RecF of Staphylococcus epidermidis (strain ATCC 12228 / FDA PCI 1200).